The chain runs to 265 residues: uncharacterized protein (265 aa).

Disordered stretches follow at residues 62 to 94 and 118 to 149; these read RNKKKEEKKGKGLMTARGGNRRDTETSQQALGK and MVPGSYIKDGPKKSDTDIKDAVDPESTQRPNP. Residues 126–139 are compositionally biased toward basic and acidic residues; that stretch reads DGPKKSDTDIKDAV.

This is an uncharacterized protein from Homo sapiens (Human).